The primary structure comprises 728 residues: Procollagen-lysine,2-oxoglutarate 5-dioxygenase 1 (728 aa).

A signal peptide spans 1 to 18 (MRSLLLLASLAWLLLAQA). N-linked (GlcNAc...) asparagine glycosylation is found at Asn-177, Asn-198, and Asn-539. In terms of domain architecture, Fe2OG dioxygenase spans 637–728 (QFDLAFVVRY…RYIAVSFVDP (92 aa)). Positions 657 and 659 each coordinate Fe cation. The N-linked (GlcNAc...) asparagine glycan is linked to Asn-687. A Fe cation-binding site is contributed by His-709. The active site involves Arg-719.

As to quaternary structure, homodimer. Identified in a complex with P3H3 and P3H4. Fe(2+) serves as cofactor. It depends on L-ascorbate as a cofactor.

Its subcellular location is the rough endoplasmic reticulum membrane. The enzyme catalyses L-lysyl-[collagen] + 2-oxoglutarate + O2 = (5R)-5-hydroxy-L-lysyl-[collagen] + succinate + CO2. Functionally, part of a complex composed of PLOD1, P3H3 and P3H4 that catalyzes hydroxylation of lysine residues in collagen alpha chains and is required for normal assembly and cross-linkling of collagen fibrils. Forms hydroxylysine residues in -Xaa-Lys-Gly- sequences in collagens. These hydroxylysines serve as sites of attachment for carbohydrate units and are essential for the stability of the intermolecular collagen cross-links. This chain is Procollagen-lysine,2-oxoglutarate 5-dioxygenase 1 (Plod1), found in Rattus norvegicus (Rat).